The primary structure comprises 254 residues: 3-deoxy-manno-octulosonate cytidylyltransferase (254 aa).

It belongs to the KdsB family.

Its subcellular location is the cytoplasm. It catalyses the reaction 3-deoxy-alpha-D-manno-oct-2-ulosonate + CTP = CMP-3-deoxy-beta-D-manno-octulosonate + diphosphate. It functions in the pathway nucleotide-sugar biosynthesis; CMP-3-deoxy-D-manno-octulosonate biosynthesis; CMP-3-deoxy-D-manno-octulosonate from 3-deoxy-D-manno-octulosonate and CTP: step 1/1. Its pathway is bacterial outer membrane biogenesis; lipopolysaccharide biosynthesis. Activates KDO (a required 8-carbon sugar) for incorporation into bacterial lipopolysaccharide in Gram-negative bacteria. The polypeptide is 3-deoxy-manno-octulosonate cytidylyltransferase (Porphyromonas gingivalis (strain ATCC BAA-308 / W83)).